Consider the following 218-residue polypeptide: Capsid protein (218 aa).

Methionine 1 carries the N-acetylmethionine; by host modification. The interval 1-30 (MDKSESTSAGRNRRRRPRRGSRSAPSSSDA) is disordered. Residues 11–21 (RNRRRRPRRGS) are compositionally biased toward basic residues.

Belongs to the cucumovirus capsid protein family.

The protein resides in the virion. Capsid protein. Probably binds RNA and plays a role in packaging. The sequence is that of Capsid protein from Cucumis sativus (Cucumber).